The chain runs to 261 residues: Histone H3-like centromeric protein cpar-1 (261 aa).

The interval 80-150 (TVGSNSTNLV…AGSSSSDRVR (71 aa)) is disordered. Positions 113–127 (AANSHHQSPINVGNR) are enriched in polar residues. Over residues 132–146 (GTNGRNGSRAGSSSS) the composition is skewed to low complexity. An H3-like region spans residues 164-261 (YRPGQKALEE…LYRRLCLPNL (98 aa)).

Belongs to the histone H3 family. Forms a nucleosome-like histone octamer containing two molecules each of H2A, H2B, cpar-1 and H4 assembled in one cpar-1-H4 heterotetramer and two H2A-H2B heterodimers. In terms of processing, cleaved at the onset of meiotic anaphase I, likely by separase sep-1.

It is found in the nucleus. Its subcellular location is the chromosome. Its function is as follows. Histone H3-like variant which exclusively replaces conventional H3 in the nucleosome core of centromeric chromatin at the inner plate of the kinetochore. Required for recruitment and assembly of kinetochore proteins, mitotic progression and chromosome segregation. May serve as an epigenetic mark that propagates centromere identity through replication and cell division. Not required for chromosome segregation during meiosis. This chain is Histone H3-like centromeric protein cpar-1, found in Caenorhabditis elegans.